Reading from the N-terminus, the 160-residue chain is E3 ubiquitin ligase complex SCF subunit sconC (160 aa).

The segment at 101-160 (ILAANYLDIKALLDVGCKTVANMIKGKSPEEIRKTFNIQNDFTPEEEDQIRRENEWAEDR) is interaction with the F-box domain of F-box proteins.

The protein belongs to the SKP1 family. As to quaternary structure, component of the SCF (SKP1-CUL1-F-box protein) E3 ubiquitin ligase complexes.

Its pathway is protein modification; protein ubiquitination. Functionally, essential component of the SCF (SKP1-CUL1-F-box protein) E3 ubiquitin ligase complexes, which mediate the ubiquitination and subsequent proteasomal degradation of target proteins. Controls sulfur metabolite repression, probably by mediating the inactivation or degradation of the metR transcription factor. This chain is E3 ubiquitin ligase complex SCF subunit sconC (sconC), found in Talaromyces marneffei (strain ATCC 18224 / CBS 334.59 / QM 7333) (Penicillium marneffei).